The chain runs to 596 residues: NADH-quinone oxidoreductase subunit C/D (596 aa).

The segment at 1–186 (MTDLTAQDAA…DPFELTKAKQ (186 aa)) is NADH dehydrogenase I subunit C. Positions 210-596 (DFMFLNLGPN…IDFVMSDVDR (387 aa)) are NADH dehydrogenase I subunit D.

The protein in the N-terminal section; belongs to the complex I 30 kDa subunit family. In the C-terminal section; belongs to the complex I 49 kDa subunit family. As to quaternary structure, NDH-1 is composed of 13 different subunits. Subunits NuoB, CD, E, F, and G constitute the peripheral sector of the complex.

It localises to the cell inner membrane. It catalyses the reaction a quinone + NADH + 5 H(+)(in) = a quinol + NAD(+) + 4 H(+)(out). Functionally, NDH-1 shuttles electrons from NADH, via FMN and iron-sulfur (Fe-S) centers, to quinones in the respiratory chain. The immediate electron acceptor for the enzyme in this species is believed to be ubiquinone. Couples the redox reaction to proton translocation (for every two electrons transferred, four hydrogen ions are translocated across the cytoplasmic membrane), and thus conserves the redox energy in a proton gradient. The polypeptide is NADH-quinone oxidoreductase subunit C/D (Salmonella dublin (strain CT_02021853)).